The chain runs to 329 residues: Prostaglandin reductase 1 (329 aa).

Threonine 18 bears the Phosphothreonine mark. NADP(+) contacts are provided by residues 152 to 155 (GAVG), lysine 178, tyrosine 193, asparagine 217, 239 to 245 (CGAISQY), 270 to 272 (FIV), and asparagine 321. At lysine 178 the chain carries N6-(2-hydroxyisobutyryl)lysine; alternate. Lysine 178 carries the post-translational modification N6-acetyllysine; alternate.

Belongs to the NADP-dependent oxidoreductase L4BD family. As to quaternary structure, monomer or homodimer.

Its subcellular location is the cytoplasm. It catalyses the reaction 13,14-dihydro-15-oxo-prostaglandin E1 + NADP(+) = 15-oxoprostaglandin E1 + NADPH + H(+). The enzyme catalyses 13,14-dihydro-15-oxo-prostaglandin E2 + NADP(+) = 15-oxoprostaglandin E2 + NADPH + H(+). The catalysed reaction is 13,14-dihydro-15-oxo-prostaglandin F1alpha + NADP(+) = 15-oxoprostaglandin F1alpha + NADPH + H(+). It carries out the reaction 13,14-dihydro-15-oxo-PGF2alpha + NADP(+) = 15-oxoprostaglandin F2alpha + NADPH + H(+). It catalyses the reaction leukotriene B4 + NADP(+) = 12-oxo-leukotriene B4 + NADPH + H(+). The enzyme catalyses 20-hydroxy-leukotriene B4 + NADP(+) = 12-oxo-20-hydroxy-leukotriene B4 + NADPH + H(+). The catalysed reaction is 6-trans-leukotriene B4 + NADP(+) = 12-oxo-(5S)-hydroxy-(6E,8E,10E,14Z)-eicosatetraenoate + NADPH + H(+). It carries out the reaction (5S,12S)-dihydroxy-(6E,10E,12E,14Z)-eicosatetraenoate + NADP(+) = 12-oxo-(5S)-hydroxy-(6E,8E,10E,14Z)-eicosatetraenoate + NADPH + H(+). It catalyses the reaction an n-alkanal + NADP(+) = an alk-2-enal + NADPH + H(+). The enzyme catalyses hexanal + NADP(+) = (E)-hex-2-enal + NADPH + H(+). The catalysed reaction is octanal + NADP(+) = (2E)-octenal + NADPH + H(+). It carries out the reaction decanal + NADP(+) = (2E)-decenal + NADPH + H(+). It catalyses the reaction dodecanal + NADP(+) = (2E)-dodecenal + NADPH + H(+). The enzyme catalyses 4-hydroxynonanal + NADP(+) = (E)-4-hydroxynon-2-enal + NADPH + H(+). The catalysed reaction is pentan-2-one + NADP(+) = (E)-pent-3-en-2-one + NADPH + H(+). It carries out the reaction nonan-2-one + NADP(+) = (3E)-nonen-2-one + NADPH + H(+). In terms of biological role, NAD(P)H-dependent oxidoreductase involved in metabolic inactivation of pro- and anti-inflammatory eicosanoids: prostaglandins (PG), leukotrienes (LT) and lipoxins (LX). Catalyzes with high efficiency the reduction of the 13,14 double bond of 15-oxoPGs, including 15-oxo-PGE1, 15-oxo-PGE2, 15-oxo-PGF1-alpha and 15-oxo-PGF2-alpha. Catalyzes with lower efficiency the oxidation of the hydroxyl group at C12 of LTB4 and its derivatives, converting them into biologically less active 12-oxo-LTB4 metabolites. Reduces 15-oxo-LXA4 to 13,14 dihydro-15-oxo-LXA4, enhancing neutrophil recruitment at the inflammatory site. Plays a role in metabolic detoxification of alkenals and ketones. Reduces alpha,beta-unsaturated alkenals and ketones, particularly those with medium-chain length, showing highest affinity toward (2E)-decenal and (3E)-3-nonen-2-one. May inactivate 4-hydroxy-2-nonenal, a cytotoxic lipid constituent of oxidized low-density lipoprotein particles. This is Prostaglandin reductase 1 (Ptgr1) from Mus musculus (Mouse).